We begin with the raw amino-acid sequence, 124 residues long: Small polypeptide ROTUNDIFOLIA LIKE 3 (124 aa).

Residues methionine 1–serine 25 form a disordered region. N-linked (GlcNAc...) asparagine glycosylation is found at asparagine 35 and asparagine 38. A helical membrane pass occupies residues alanine 59 to serine 75. The segment at tryptophan 60–lysine 95 is disordered. Over residues serine 71–glutamine 91 the composition is skewed to low complexity. Asparagine 88 carries an N-linked (GlcNAc...) asparagine glycan. The tract at residues arginine 92–tyrosine 124 is required for DVL/RTFL small polypeptide activity.

The protein belongs to the DVL/RTFL small polypeptides family.

The protein localises to the cell membrane. Functionally, small polypeptide acting as a regulatory molecule which coordinates cellular responses required for differentiation, growth and development, probably by restricting polar cell proliferation in lateral organs (e.g. leaves and petioles). This chain is Small polypeptide ROTUNDIFOLIA LIKE 3, found in Oryza sativa subsp. indica (Rice).